A 423-amino-acid polypeptide reads, in one-letter code: UDP-N-acetylgalactosamine-undecaprenyl-phosphate N-acetylgalactosaminephosphotransferase (423 aa).

Residues 1–13 are Extracellular-facing; sequence MSYQRRHSRWYER. A helical membrane pass occupies residues 14-34; the sequence is VLFSPPSLFFLGAMLAVCLPA. The Cytoplasmic portion of the chain corresponds to 35 to 47; it reads LERWGWGFWEYFD. The chain crosses the membrane as a helical span at residues 48 to 68; the sequence is AVRVNTLGGAFVAFLLTGIVL. At 69–79 the chain is on the extracellular side; it reads YRFLRYPGASP. A helical membrane pass occupies residues 80–100; it reads VAYMIPTVTTLYGSLVGALFF. The Cytoplasmic portion of the chain corresponds to 101 to 107; that stretch reads LRLPYSR. Residues 108 to 128 traverse the membrane as a helical segment; that stretch reads QVLFESYVVALLCCWVVYFIG. Residues 129–239 are Extracellular-facing; sequence RRYRTPKYAL…IYAFIKRGMD (111 aa). Residues 240 to 260 traverse the membrane as a helical segment; the sequence is ILAAVIAIPLFSPLMLATAVL. The Cytoplasmic segment spans residues 261-423; it reads IKLESPGPVM…RTILTGFGAR (163 aa).

This sequence belongs to the bacterial sugar transferase family.

The protein localises to the membrane. It carries out the reaction di-trans,octa-cis-undecaprenyl phosphate + UDP-N-acetyl-alpha-D-galactosamine = N-acetyl-alpha-D-galactosaminyl-di-trans,octa-cis-undecaprenyl diphosphate + UMP. The protein operates within bacterial outer membrane biogenesis; LPS O-antigen biosynthesis. Functionally, transfers N-acetyl-galactosamine (GalNAc) to undecaprenyl phosphate, a step in the assembly of the repeating-unit of the O-antigen. Shows no activity with UDP-N-acetyl-alpha-D-glucosamine. This is UDP-N-acetylgalactosamine-undecaprenyl-phosphate N-acetylgalactosaminephosphotransferase (wecA) from Aeromonas hydrophila.